The following is a 277-amino-acid chain: Small ribosomal subunit protein uS2 (277 aa).

A disordered region spans residues Leu-254 to Ala-277.

This sequence belongs to the universal ribosomal protein uS2 family.

The sequence is that of Small ribosomal subunit protein uS2 (rpsB) from Mycobacterium leprae (strain TN).